Consider the following 81-residue polypeptide: Alpha-toxin Ac1 (81 aa).

The first 17 residues, 1-17 (YIVMISLALVVMIGVES), serve as a signal peptide directing secretion. Positions 19–80 (RDGYIVYPNN…PIKDPSQKCT (62 aa)) constitute an LCN-type CS-alpha/beta domain. Disulfide bonds link Cys-29–Cys-79, Cys-33–Cys-51, Cys-37–Cys-61, and Cys-41–Cys-63.

It belongs to the long (4 C-C) scorpion toxin superfamily. Sodium channel inhibitor family. Alpha subfamily. Expressed by the venom gland.

The protein resides in the secreted. Its function is as follows. Alpha toxins bind voltage-independently at site-3 of sodium channels (Nav) and inhibit the inactivation of the activated channels, thereby blocking neuronal transmission. This Androctonus crassicauda (Arabian fat-tailed scorpion) protein is Alpha-toxin Ac1.